Here is a 263-residue protein sequence, read N- to C-terminus: 3-methyl-2-oxobutanoate hydroxymethyltransferase (263 aa).

Asp-43 and Asp-82 together coordinate Mg(2+). 3-methyl-2-oxobutanoate is bound by residues 43-44, Asp-82, and Lys-111; that span reads DS. Residue Glu-113 coordinates Mg(2+). Residue Glu-179 is the Proton acceptor of the active site.

It belongs to the PanB family. As to quaternary structure, homodecamer; pentamer of dimers. Requires Mg(2+) as cofactor.

It localises to the cytoplasm. It carries out the reaction 3-methyl-2-oxobutanoate + (6R)-5,10-methylene-5,6,7,8-tetrahydrofolate + H2O = 2-dehydropantoate + (6S)-5,6,7,8-tetrahydrofolate. Its pathway is cofactor biosynthesis; (R)-pantothenate biosynthesis; (R)-pantoate from 3-methyl-2-oxobutanoate: step 1/2. Catalyzes the reversible reaction in which hydroxymethyl group from 5,10-methylenetetrahydrofolate is transferred onto alpha-ketoisovalerate to form ketopantoate. The sequence is that of 3-methyl-2-oxobutanoate hydroxymethyltransferase from Neisseria gonorrhoeae (strain ATCC 700825 / FA 1090).